An 854-amino-acid polypeptide reads, in one-letter code: Arsenate respiratory reductase molybdopterin-containing subunit ArrA (854 aa).

Residues 1 to 41 constitute a signal peptide (tat-type signal); sequence MKKENQVNLGRRQLLKSTAAGTVLTGIGGTLSFTPIVEGIA. Positions 54 to 110 constitute a 4Fe-4S Mo/W bis-MGD-type domain; the sequence is GEWLATTCQGCTSWCAKQIYVMDGRALKVRGNPNSGVHGMSSCPRQHLSLQQVYDPD. The [4Fe-4S] cluster site is built by C61, C64, C68, and C96. R165 contributes to the arsenite binding site. Y166 is a binding site for arsenate. Residue H189 participates in arsenite binding. S190 is a binding site for arsenate. Position 193 (C193) interacts with Mo-bis(molybdopterin guanine dinucleotide). K198 is an arsenate binding site. Y210 lines the arsenite pocket.

It belongs to the prokaryotic molybdopterin-containing oxidoreductase family. Heterodimer composed of one large subunit (ArrA) and one small subunit (ArrB). [4Fe-4S] cluster is required as a cofactor. It depends on Mo-bis(molybdopterin guanine dinucleotide) as a cofactor. Post-translationally, predicted to be exported by the Tat system. The position of the signal peptide cleavage has not been experimentally proven.

It localises to the periplasm. The catalysed reaction is arsenite + A + H2O = arsenate + AH2 + H(+). With respect to regulation, phosphate is a competitive inhibitor. Functionally, component of the arsenate respiratory reductase (Arr) complex, which catalyzes the reduction of arsenate (As(V)) to arsenite (As(III)). ArrA is the arsenate-binding subunit. The periplasmic localization of this complex may allow the cell to couple arsenate reduction to energy production before arsenate can be transported to the cell cytoplasm and enter the ars detoxification pathway, an energy-requiring process. The polypeptide is Arsenate respiratory reductase molybdopterin-containing subunit ArrA (Shewanella sp. (strain ANA-3)).